The chain runs to 291 residues: Elongation factor Ts (291 aa).

Residues 78-81 (TDFV) are involved in Mg(2+) ion dislocation from EF-Tu.

This sequence belongs to the EF-Ts family.

It localises to the cytoplasm. In terms of biological role, associates with the EF-Tu.GDP complex and induces the exchange of GDP to GTP. It remains bound to the aminoacyl-tRNA.EF-Tu.GTP complex up to the GTP hydrolysis stage on the ribosome. This is Elongation factor Ts from Ureaplasma urealyticum serovar 10 (strain ATCC 33699 / Western).